Consider the following 210-residue polypeptide: Mitochondrial import receptor subunit TOM20-2 (210 aa).

N-acetylmethionine is present on methionine 1. Over 1 to 178 (MEFSTADFER…SSKKKKRNTE (178 aa)) the chain is Cytoplasmic. 2 TPR repeats span residues 42–75 (LLEL…NPGK) and 83–120 (ANAY…DPGN). Over residues 151-161 (GGGGGGGGGGM) the composition is skewed to gly residues. Residues 151 to 172 (GGGGGGGGGGMASSNVSQSSKK) form a disordered region. The chain crosses the membrane as a helical span at residues 179–199 (FTYDVCGWIILACGIVAWVGM). Topologically, residues 200–210 (AKSLGPPPPAR) are mitochondrial intermembrane.

Belongs to the Tom20 family. Forms part of the preprotein translocase complex of the outer mitochondrial membrane (TOM complex) which consists of at least 6 different proteins (TOM5, TOM6, TOM7, TOM20, TOM22/TOM9 and TOM40). Component of a mitochondrial large protein complex that contains, at least, MIC60, DGS1, TOM40, TOM20 proteins, and petC/RISP. The N-terminus is blocked. Expressed in roots, flowers, young cotyledons and leaves.

It is found in the mitochondrion outer membrane. Functionally, central component of the receptor complex responsible for the recognition and translocation of cytosolically synthesized mitochondrial preproteins. Together with TOM22 functions as the transit peptide receptor at the surface of the mitochondrion outer membrane and facilitates the movement of preproteins into the translocation pore. The sequence is that of Mitochondrial import receptor subunit TOM20-2 from Arabidopsis thaliana (Mouse-ear cress).